We begin with the raw amino-acid sequence, 462 residues long: Glycine--tRNA ligase (462 aa).

Residues arginine 100 and glutamate 170 each coordinate substrate. Residues 202-204 (RNE), 212-217 (FRTREF), 287-288 (EL), and 331-334 (GVER) each bind ATP. 217-221 (FEQME) contributes to the substrate binding site. 327-331 (EPSVG) is a binding site for substrate.

The protein belongs to the class-II aminoacyl-tRNA synthetase family. Homodimer.

Its subcellular location is the cytoplasm. The catalysed reaction is tRNA(Gly) + glycine + ATP = glycyl-tRNA(Gly) + AMP + diphosphate. Its function is as follows. Catalyzes the attachment of glycine to tRNA(Gly). The protein is Glycine--tRNA ligase of Malacoplasma penetrans (strain HF-2) (Mycoplasma penetrans).